The chain runs to 220 residues: Guanylate kinase (220 aa).

One can recognise a Guanylate kinase-like domain in the interval Gly16 to Arg195. Ser23–Thr30 contacts ATP.

It belongs to the guanylate kinase family.

Its subcellular location is the cytoplasm. The enzyme catalyses GMP + ATP = GDP + ADP. In terms of biological role, essential for recycling GMP and indirectly, cGMP. The polypeptide is Guanylate kinase (Rhodopseudomonas palustris (strain ATCC BAA-98 / CGA009)).